A 195-amino-acid chain; its full sequence is Thioredoxin reductase-like selenoprotein T (195 aa).

Residues 1–19 (MRLLLLLLVAASAVVRSEA) form the signal peptide. Residues 46–49 (CVSU) constitute a cross-link (cysteinyl-selenocysteine (Cys-Sec)). Position 49 (U49) is a non-standard amino acid, selenocysteine. The chain crosses the membrane as a helical span at residues 85 to 103 (IASFLSVFKLVLIGLIIVG).

Belongs to the SelWTH family. Selenoprotein T subfamily. May contain a selenide-sulfide bond between Cys-46 and Sec-49. This bond is speculated to serve as redox-active pair. As to expression, ubiquitous. Highly expressed in the endocrine pancreas. Expressed at low levels in the adult brain.

It localises to the endoplasmic reticulum membrane. It carries out the reaction [thioredoxin]-dithiol + NADP(+) = [thioredoxin]-disulfide + NADPH + H(+). Functionally, selenoprotein with thioredoxin reductase-like oxidoreductase activity. Protects dopaminergic neurons against oxidative stress and cell death. Involved in ADCYAP1/PACAP-induced calcium mobilization and neuroendocrine secretion. Plays a role in fibroblast anchorage and redox regulation. In gastric smooth muscle, modulates the contraction processes through the regulation of calcium release and MYLK activation. In pancreatic islets, involved in the control of glucose homeostasis, contributes to prolonged ADCYAP1/PACAP-induced insulin secretion. The protein is Thioredoxin reductase-like selenoprotein T of Mus musculus (Mouse).